Consider the following 223-residue polypeptide: Glutathione S-transferase U6 (223 aa).

In terms of domain architecture, GST N-terminal spans 5 to 84 (EEVKLLGIWA…YIDETWKHNP (80 aa)). Residues 15 to 16 (SP), 41 to 42 (NK), 55 to 56 (KI), and 68 to 69 (ES) each bind glutathione. The GST C-terminal domain maps to 89-216 (DPFQRSKARV…EKHIEHMNNM (128 aa)). Thr-150 bears the Phosphothreonine mark.

Belongs to the GST superfamily. Tau family.

The protein localises to the cytoplasm. It is found in the cytosol. The enzyme catalyses RX + glutathione = an S-substituted glutathione + a halide anion + H(+). Functionally, may be involved in the conjugation of reduced glutathione to a wide number of exogenous and endogenous hydrophobic electrophiles and have a detoxification role against certain herbicides. The sequence is that of Glutathione S-transferase U6 (GSTU6) from Arabidopsis thaliana (Mouse-ear cress).